Here is a 170-residue protein sequence, read N- to C-terminus: Putative pre-16S rRNA nuclease (170 aa).

Residues Met-1–Gly-29 are disordered.

This sequence belongs to the YqgF nuclease family.

The protein localises to the cytoplasm. Its function is as follows. Could be a nuclease involved in processing of the 5'-end of pre-16S rRNA. The polypeptide is Putative pre-16S rRNA nuclease (Mycobacterium ulcerans (strain Agy99)).